The chain runs to 256 residues: CCAAT/enhancer-binding protein delta (256 aa).

At serine 2 the chain carries N-acetylserine. Disordered stretches follow at residues 18-40, 92-121, and 139-206; these read TAEP…AEPA, GGPA…APGS, and AAAQ…NQEM. A Glycyl lysine isopeptide (Lys-Gly) (interchain with G-Cter in SUMO) cross-link involves residue lysine 108. A compositionally biased stretch (pro residues) spans 143–162; the sequence is PTPPASPEPPRRSPAPPAPG. Residues 164-188 show a composition bias toward basic and acidic residues; the sequence is ARDKAAGKRGPDRGSPEYRQRRERN. Positions 178–241 constitute a bZIP domain; it reads SPEYRQRRER…AGLRRFFKQL (64 aa). The interval 182-209 is basic motif; it reads RQRRERNNIAVRKSRDKAKRRNQEMQQK. The segment at 213 to 241 is leucine-zipper; the sequence is LSAENEKLQQRVEQLTRDLAGLRRFFKQL.

The protein belongs to the bZIP family. C/EBP subfamily. Binds DNA as a homodimer and as a heterodimer. Can form stable heterodimers with CEBPB. Can form stable heterodimers with CEBPA and CEBPE. Directly interacts with SPI1/PU.1; this interaction does not affect DNA-binding properties of each partner. Interacts with PRDM16.

The protein resides in the nucleus. Functionally, transcription activator that recognizes two different DNA motifs: the CCAAT homology common to many promoters and the enhanced core homology common to many enhancers. Important transcription factor regulating the expression of genes involved in immune and inflammatory responses. Transcriptional activator that enhances IL6 transcription alone and as heterodimer with CEBPB. The protein is CCAAT/enhancer-binding protein delta (CEBPD) of Bos taurus (Bovine).